The primary structure comprises 476 residues: Protein transport protein Sec61 subunit alpha (476 aa).

At 2 to 33 (GIKFLEVIKPFCAVLPEIQKPERKIQFREKVL) the chain is on the cytoplasmic side. Residues 34–53 (WTAITLFIFLVCCQIPLFGI) form a helical membrane-spanning segment. At 54–76 (MSSDSADPFYWMRVILASNRGTL) the chain is on the lumenal side. Residues 77 to 96 (MELGISPIVTSGLIMQLLAG) form a helical membrane-spanning segment. Topologically, residues 97–117 (AKIIGVGDTPKDRALFNGAQK) are cytoplasmic. Residues 118–138 (LFGMIITIGQAIVYVMTGMYG) form a helical membrane-spanning segment. At 139 to 144 (DPSEMG) the chain is on the lumenal side. A helical membrane pass occupies residues 145 to 165 (AGICLLIIIQLFVAGLIVLLL). Topologically, residues 166-172 (DELLQKG) are cytoplasmic. A helical transmembrane segment spans residues 173–193 (YGLGSGISLFIATNICETIVW). Residues 194-240 (KAFSPTTVNTGRGTEFEGAIIALFHLLATRTDKVRALREGFYRQNLP) are Lumenal-facing. Residues 241–261 (NLMNLIATVFVFAVVIYFQGF) traverse the membrane as a helical segment. Over 262–288 (RVDLPIKSARYRGQYNTYPIKLFYTSN) the chain is Cytoplasmic. A helical membrane pass occupies residues 289–309 (IPIILQSALVSNLYVISQMLS). The Lumenal segment spans residues 310–354 (TRFSGNFLVNLLGTWSDATSGGPARAYPVAGLCYYLSPPESFGSV). Residues 355-375 (LDDPVHAGIYIVFMLGSCAFF) form a helical membrane-spanning segment. The Cytoplasmic portion of the chain corresponds to 376 to 420 (SKTWIEVSGSSAKDVAKQLKEQQMVMRGHRETSMVHELNRYIPTA). Residues 421 to 441 (AAFGGLCIGGLSVMADFLGAI) traverse the membrane as a helical segment. Residues 442–445 (GSGT) lie on the Lumenal side of the membrane. The chain crosses the membrane as a helical span at residues 446 to 462 (GILLAVTIIYQYFEIFV). The Cytoplasmic segment spans residues 463–476 (KEQSEVGSMGALLF).

Belongs to the SecY/SEC61-alpha family. The SEC61 channel-forming translocon complex consists of channel-forming core components SEC61A1, SEC61B and SEC61G and different auxiliary components such as SEC62 and SEC63. The SEC61 channel associates with the multi-pass translocon (MPT) complex.

It is found in the endoplasmic reticulum membrane. Functionally, component of SEC61 channel-forming translocon complex that mediates transport of signal peptide-containing precursor polypeptides across the endoplasmic reticulum (ER). Forms a ribosome receptor and a gated pore in the ER membrane, both functions required for cotranslational translocation of nascent polypeptides. May cooperate with auxiliary protein SEC62, SEC63 and HSPA5/BiP to enable post-translational transport of small presecretory proteins. The SEC61 channel is also involved in ER membrane insertion of transmembrane proteins: it mediates membrane insertion of the first few transmembrane segments of proteins, while insertion of subsequent transmembrane regions of multi-pass membrane proteins is mediated by the multi-pass translocon (MPT) complex. The polypeptide is Protein transport protein Sec61 subunit alpha (sec61a) (Hemitripterus americanus (Sea raven)).